The following is a 209-amino-acid chain: Uracil phosphoribosyltransferase (209 aa).

Residues Arg79, Arg104, and 131 to 139 (DPMLATGGS) each bind 5-phospho-alpha-D-ribose 1-diphosphate. Uracil is bound by residues Ile194 and 199 to 201 (GDA). Position 200 (Asp200) interacts with 5-phospho-alpha-D-ribose 1-diphosphate.

Belongs to the UPRTase family. Mg(2+) serves as cofactor.

It catalyses the reaction UMP + diphosphate = 5-phospho-alpha-D-ribose 1-diphosphate + uracil. The protein operates within pyrimidine metabolism; UMP biosynthesis via salvage pathway; UMP from uracil: step 1/1. Allosterically activated by GTP. Functionally, catalyzes the conversion of uracil and 5-phospho-alpha-D-ribose 1-diphosphate (PRPP) to UMP and diphosphate. The sequence is that of Uracil phosphoribosyltransferase from Symbiobacterium thermophilum (strain DSM 24528 / JCM 14929 / IAM 14863 / T).